A 117-amino-acid chain; its full sequence is Putative iron-sulfur cluster insertion protein ErpA (117 aa).

Cys45, Cys109, and Cys111 together coordinate iron-sulfur cluster.

It belongs to the HesB/IscA family. Homodimer. Iron-sulfur cluster is required as a cofactor.

Required for insertion of 4Fe-4S clusters. In Chromobacterium violaceum (strain ATCC 12472 / DSM 30191 / JCM 1249 / CCUG 213 / NBRC 12614 / NCIMB 9131 / NCTC 9757 / MK), this protein is Putative iron-sulfur cluster insertion protein ErpA.